A 348-amino-acid chain; its full sequence is Methylthioribose-1-phosphate isomerase (348 aa).

Residues 48-50 (RGA), arginine 90, and glutamine 195 contribute to the substrate site. Aspartate 236 acts as the Proton donor in catalysis. 246 to 247 (NK) provides a ligand contact to substrate.

Belongs to the eIF-2B alpha/beta/delta subunits family. MtnA subfamily.

It catalyses the reaction 5-(methylsulfanyl)-alpha-D-ribose 1-phosphate = 5-(methylsulfanyl)-D-ribulose 1-phosphate. It participates in amino-acid biosynthesis; L-methionine biosynthesis via salvage pathway; L-methionine from S-methyl-5-thio-alpha-D-ribose 1-phosphate: step 1/6. Functionally, catalyzes the interconversion of methylthioribose-1-phosphate (MTR-1-P) into methylthioribulose-1-phosphate (MTRu-1-P). The polypeptide is Methylthioribose-1-phosphate isomerase (Exiguobacterium sibiricum (strain DSM 17290 / CCUG 55495 / CIP 109462 / JCM 13490 / 255-15)).